The chain runs to 143 residues: ATP synthase epsilon chain (143 aa).

The protein belongs to the ATPase epsilon chain family. As to quaternary structure, F-type ATPases have 2 components, CF(1) - the catalytic core - and CF(0) - the membrane proton channel. CF(1) has five subunits: alpha(3), beta(3), gamma(1), delta(1), epsilon(1). CF(0) has three main subunits: a, b and c.

Its subcellular location is the cell inner membrane. Produces ATP from ADP in the presence of a proton gradient across the membrane. This chain is ATP synthase epsilon chain, found in Dichelobacter nodosus (strain VCS1703A).